Reading from the N-terminus, the 60-residue chain is Alpha-conotoxin-like 289 (60 aa).

The signal sequence occupies residues 1 to 16 (MFTVFLLVVLATTVVS). A propeptide spanning residues 17-42 (FTSDRAFRGRNAAAKASGLVGLTDKR) is cleaved from the precursor. Glutamine 43 carries the pyrrolidone carboxylic acid modification. 2 cysteine pairs are disulfide-bonded: cysteine 45–cysteine 51 and cysteine 46–cysteine 59. A ser-Xaa-Pro motif, crucial for potent interaction with nAChR region spans residues 47-49 (SYP). Cysteine 59 is modified (cysteine amide).

Belongs to the conotoxin A superfamily. Expressed by the venom duct.

Its subcellular location is the secreted. Functionally, alpha-conotoxins act on postsynaptic membranes, they bind to the nicotinic acetylcholine receptors (nAChR) and thus inhibit them. In Conus ammiralis (Admiral cone), this protein is Alpha-conotoxin-like 289.